The following is a 457-amino-acid chain: Acetylcholine receptor subunit alpha (457 aa).

The first 20 residues, 1 to 20 (MELTAVLLLLGLCSAGTVLG), serve as a signal peptide directing secretion. Topologically, residues 21–230 (SEHETRLVAK…ITYHFVMQRL (210 aa)) are extracellular. 2 cysteine pairs are disulfide-bonded: cysteine 148-cysteine 162 and cysteine 212-cysteine 213. N-linked (GlcNAc...) asparagine glycosylation is present at asparagine 161. 3 consecutive transmembrane segments (helical) span residues 231–255 (PLYF…VFYL), 263–281 (MTLS…LVIV), and 297–316 (YMLF…VIVI). Residues 317–428 (NTHHRSPSTH…WKYVAMVMDH (112 aa)) lie on the Cytoplasmic side of the membrane. The chain crosses the membrane as a helical span at residues 429-447 (ILLGVFMLVCLIGTLAVFA).

The protein belongs to the ligand-gated ion channel (TC 1.A.9) family. Acetylcholine receptor (TC 1.A.9.1) subfamily. Alpha-1/CHRNA1 sub-subfamily. In terms of assembly, one of the alpha chains that assemble within the acetylcholine receptor, a pentamer of two alpha chains, a beta, a delta, and a gamma (in immature muscle) or epsilon (in mature muscle) chains. The muscle heteropentamer composed of alpha-1, beta-1, delta, epsilon subunits interacts with the alpha-conotoxin ImII.

The protein localises to the postsynaptic cell membrane. It localises to the cell membrane. The enzyme catalyses K(+)(in) = K(+)(out). It carries out the reaction Na(+)(in) = Na(+)(out). Functionally, upon acetylcholine binding, the AChR responds by an extensive change in conformation that affects all subunits and leads to opening of an ion-conducting channel across the plasma membrane. The protein is Acetylcholine receptor subunit alpha (Chrna1) of Rattus norvegicus (Rat).